Consider the following 151-residue polypeptide: Transcription elongation factor Spt5 (151 aa).

The region spanning 98-128 is the KOW domain; sequence PGQVVEIVAGAFKGMKARVIDVNQSKGQVTV.

It belongs to the archaeal Spt5 family. Heterodimer composed of Spt4 and Spt5. Interacts with RNA polymerase (RNAP).

Stimulates transcription elongation. In Aeropyrum pernix (strain ATCC 700893 / DSM 11879 / JCM 9820 / NBRC 100138 / K1), this protein is Transcription elongation factor Spt5.